Consider the following 87-residue polypeptide: Large ribosomal subunit protein bL27 (87 aa).

It belongs to the bacterial ribosomal protein bL27 family.

This is Large ribosomal subunit protein bL27 from Pseudarthrobacter chlorophenolicus (strain ATCC 700700 / DSM 12829 / CIP 107037 / JCM 12360 / KCTC 9906 / NCIMB 13794 / A6) (Arthrobacter chlorophenolicus).